Reading from the N-terminus, the 106-residue chain is U1-lycotoxin-Ls1b (106 aa).

The N-terminal stretch at 1 to 19 is a signal peptide; the sequence is MKVLVVVALLVTLISYSSS. A propeptide spanning residues 20–40 is cleaved from the precursor; that stretch reads EGIDDLEADELLSLMANEQTR. 4 cysteine pairs are disulfide-bonded: Cys-43–Cys-58, Cys-50–Cys-67, Cys-57–Cys-85, and Cys-69–Cys-83.

This sequence belongs to the neurotoxin 19 (CSTX) family. 04 (U1-Lctx) subfamily. In terms of tissue distribution, expressed by the venom gland.

It is found in the secreted. This is U1-lycotoxin-Ls1b from Lycosa singoriensis (Wolf spider).